The primary structure comprises 96 residues: Progonadoliberin-1 (96 aa).

The N-terminal stretch at 1–26 (MHRKMAVKTLSVWLLLVGTLVPQHCC) is a signal peptide. Glutamine 27 bears the Pyrrolidone carboxylic acid mark. Position 36 is a glycine amide (glycine 36).

It belongs to the GnRH family. Preoptic area of the brain.

The protein localises to the secreted. In terms of biological role, stimulates the secretion of gonadotropins. The protein is Progonadoliberin-1 (gnrh1) of Verasper moseri (Barfin flounder).